A 663-amino-acid chain; its full sequence is DNA topoisomerase 1 (663 aa).

The region spanning 4–137 (SWLIITEKDN…TVKVDRVRYS (134 aa)) is the Toprim domain. Residues E10 and D106 each contribute to the Mg(2+) site. In terms of domain architecture, Topo IA-type catalytic spans 155-558 (DFNLANAALA…ESREMLLQIL (404 aa)). Residues 193–198 (SVGRVQ) are interaction with DNA. Residue Y306 is the O-(5'-phospho-DNA)-tyrosine intermediate of the active site. The segment at 583 to 610 (CPECGGELVVRQSKAGKRFIGCSNYPDC) adopts a C4-type 1 zinc-finger fold. Residues 629-653 (CKEHEIKEVKIRTKKGYWNLGCPYC) form a C4-type 2; atypical zinc finger.

This sequence belongs to the type IA topoisomerase family. Monomer. Requires Mg(2+) as cofactor.

It catalyses the reaction ATP-independent breakage of single-stranded DNA, followed by passage and rejoining.. Its function is as follows. Releases the supercoiling and torsional tension of DNA, which is introduced during the DNA replication and transcription, by transiently cleaving and rejoining one strand of the DNA duplex. Introduces a single-strand break via transesterification at a target site in duplex DNA. The scissile phosphodiester is attacked by the catalytic tyrosine of the enzyme, resulting in the formation of a DNA-(5'-phosphotyrosyl)-enzyme intermediate and the expulsion of a 3'-OH DNA strand. The free DNA strand then undergoes passage around the unbroken strand, thus removing DNA supercoils. Finally, in the religation step, the DNA 3'-OH attacks the covalent intermediate to expel the active-site tyrosine and restore the DNA phosphodiester backbone. The sequence is that of DNA topoisomerase 1 from Archaeoglobus fulgidus (strain ATCC 49558 / DSM 4304 / JCM 9628 / NBRC 100126 / VC-16).